Here is a 403-residue protein sequence, read N- to C-terminus: Tyrosine--tRNA ligase (403 aa).

Positions 42 to 51 (PTAPDLHLGH) match the 'HIGH' region motif. The short motif at 226–230 (KMSKS) is the 'KMSKS' region element. Residue Lys229 participates in ATP binding. The 61-residue stretch at 336 to 396 (MPISAVLNKA…GKKAFGRVTL (61 aa)) folds into the S4 RNA-binding domain.

The protein belongs to the class-I aminoacyl-tRNA synthetase family. TyrS type 2 subfamily. As to quaternary structure, homodimer.

It localises to the cytoplasm. The catalysed reaction is tRNA(Tyr) + L-tyrosine + ATP = L-tyrosyl-tRNA(Tyr) + AMP + diphosphate + H(+). Catalyzes the attachment of tyrosine to tRNA(Tyr) in a two-step reaction: tyrosine is first activated by ATP to form Tyr-AMP and then transferred to the acceptor end of tRNA(Tyr). This is Tyrosine--tRNA ligase from Pseudomonas savastanoi pv. phaseolicola (strain 1448A / Race 6) (Pseudomonas syringae pv. phaseolicola (strain 1448A / Race 6)).